A 457-amino-acid polypeptide reads, in one-letter code: Choline kinase alpha (457 aa).

The segment at 1-86 is disordered; the sequence is MKTKFCTGGE…PPADEQPEPR (86 aa). Low complexity predominate over residues 13–32; the sequence is PSPLGLLLSCGSGSAAPAPG. Residues 55 to 80 show a composition bias toward pro residues; the sequence is LALPPPPPLPLPLPLPQPPPPQPPAD. Residues 117-123, Arg-146, and 207-213 each bind ATP; these read RGGLSNM and QFIPSRR. Phosphocholine is bound at residue 119 to 121; that stretch reads GLS. The residue at position 247 (Lys-247) is an N6-acetyllysine. Ser-279 is modified (phosphoserine). 2 residues coordinate ATP: Gln-308 and Asp-330.

It belongs to the choline/ethanolamine kinase family. In terms of assembly, homodimer. Heterodimer with CHKB. As to quaternary structure, monomer; acetylation by KAT5 promotes dissociation of the homodimer and monomerization. (Microbial infection) Interacts with PI4KA/PI4KIIIalpha; CHKA bridges PI4KA/PI4KIIIalpha and hepatitis C virus (HCV) non-structural protein 5A (NS5A) and potentiates NS5A-stimulated PI4KA activity, which then facilitates the targeting of the ternary complex to the ER for viral replication. In terms of processing, phosphorylated at Ser-279 by AMPK in response to glucose deprivation, leading to localization to lipid droplets. Post-translationally, acetylated by KAT5 at Lys-247 following phosphorylation by AMPK, leading to monomerization and conversion into a tyrosine-protein kinase.

It is found in the cytoplasm. The protein resides in the cytosol. It localises to the lipid droplet. The catalysed reaction is choline + ATP = phosphocholine + ADP + H(+). It carries out the reaction ethanolamine + ATP = phosphoethanolamine + ADP + H(+). It catalyses the reaction L-tyrosyl-[protein] + ATP = O-phospho-L-tyrosyl-[protein] + ADP + H(+). It functions in the pathway phospholipid metabolism; phosphatidylcholine biosynthesis; phosphocholine from choline: step 1/1. Its pathway is phospholipid metabolism; phosphatidylethanolamine biosynthesis; phosphatidylethanolamine from ethanolamine: step 1/3. With respect to regulation, homodimerization or heterodimerization is required for the choline and ethanolamine kinase activities. Its function is as follows. Plays a key role in phospholipid biosynthesis by catalyzing the phosphorylation of free choline to phosphocholine, the first step in phosphatidylcholine biosynthesis. Also phosphorylates ethanolamine, thereby contributing to phosphatidylethanolamine biosynthesis. Has higher activity with choline. May contribute to tumor cell growth. This isoform plays a key role in lipolysis of lipid droplets following glucose deprivation. In response to glucose deprivation, phosphorylated by AMPK, promoting localization to lipid droplets. Phosphorylation is followed by acetylation by KAT5, leading to dissociation of the homodimer into a monomer. Monomeric CHKA isoform 1 is converted into a tyrosine-protein kinase, which phosphorylates lipid droplet structural proteins PLIN2 and PLIN3, leading to lipolysis of lipid droplets. This is Choline kinase alpha (CHKA) from Homo sapiens (Human).